The sequence spans 210 residues: Cytochrome c biogenesis ATP-binding export protein CcmA (210 aa).

An ABC transporter domain is found at 3-205 (LHLQAAGLAC…KPSGYRELNL (203 aa)). 37–44 (GPNGSGKT) lines the ATP pocket.

This sequence belongs to the ABC transporter superfamily. CcmA exporter (TC 3.A.1.107) family. In terms of assembly, the complex is composed of two ATP-binding proteins (CcmA) and two transmembrane proteins (CcmB).

Its subcellular location is the cell inner membrane. It carries out the reaction heme b(in) + ATP + H2O = heme b(out) + ADP + phosphate + H(+). Functionally, part of the ABC transporter complex CcmAB involved in the biogenesis of c-type cytochromes; once thought to export heme, this seems not to be the case, but its exact role is uncertain. Responsible for energy coupling to the transport system. The polypeptide is Cytochrome c biogenesis ATP-binding export protein CcmA (Pseudomonas putida (strain GB-1)).